A 701-amino-acid polypeptide reads, in one-letter code: Polyribonucleotide nucleotidyltransferase (701 aa).

Mg(2+) is bound by residues D489 and D495. Residues 556–615 (PRIHTMKIHPDKIREVIGSGGKVIRSITEETGCAIDIEDDGTIRIASSDQASAEQAVKII) form the KH domain. An S1 motif domain is found at 625-693 (GQVYEGKVVR…RQGRVKLTMK (69 aa)).

Belongs to the polyribonucleotide nucleotidyltransferase family. Mg(2+) serves as cofactor.

The protein localises to the cytoplasm. It carries out the reaction RNA(n+1) + phosphate = RNA(n) + a ribonucleoside 5'-diphosphate. Involved in mRNA degradation. Catalyzes the phosphorolysis of single-stranded polyribonucleotides processively in the 3'- to 5'-direction. This Magnetococcus marinus (strain ATCC BAA-1437 / JCM 17883 / MC-1) protein is Polyribonucleotide nucleotidyltransferase.